Here is a 351-residue protein sequence, read N- to C-terminus: Fe-S cluster assembly protein DRE2 (351 aa).

The segment at 1–151 (MATTGRVLLL…KPDIGAQQAI (151 aa)) is N-terminal SAM-like domain. Disordered stretches follow at residues 93–118 (RNRE…RYND) and 157–186 (RRRK…PSSN). Composition is skewed to polar residues over residues 105 to 114 (GNGSNANSSR) and 167 to 186 (TLAS…PSSN). Residues 152 to 243 (PLKLSRRRKE…EDELLDEDDM (92 aa)) form a linker region. [2Fe-2S] cluster-binding residues include Cys-253, Cys-264, Cys-267, and Cys-269. Residues 253 to 269 (CRPKPGKRRRACKDCSC) form a fe-S binding site A region. Residues Cys-314, Cys-317, Cys-325, and Cys-328 each contribute to the [4Fe-4S] cluster site. 2 short sequence motifs (cx2C motif) span residues 314 to 317 (CGNC) and 325 to 328 (CDGC). Positions 314–328 (CGNCSLGDAFRCDGC) are fe-S binding site B.

Belongs to the anamorsin family. As to quaternary structure, monomer. Interacts with TAH18. Interacts with MIA40. [2Fe-2S] cluster serves as cofactor. Requires [4Fe-4S] cluster as cofactor.

The protein localises to the cytoplasm. It localises to the mitochondrion intermembrane space. Its function is as follows. Component of the cytosolic iron-sulfur (Fe-S) protein assembly (CIA) machinery required for the maturation of extramitochondrial Fe-S proteins. Part of an electron transfer chain functioning in an early step of cytosolic Fe-S biogenesis, facilitating the de novo assembly of a [4Fe-4S] cluster on the scaffold complex CFD1-NBP35. Electrons are transferred to DRE2 from NADPH via the FAD- and FMN-containing protein TAH18. TAH18-DRE2 are also required for the assembly of the diferric tyrosyl radical cofactor of ribonucleotide reductase (RNR), probably by providing electrons for reduction during radical cofactor maturation in the catalytic small subunit RNR2. This chain is Fe-S cluster assembly protein DRE2, found in Ajellomyces capsulatus (strain NAm1 / WU24) (Darling's disease fungus).